A 111-amino-acid polypeptide reads, in one-letter code: Large ribosomal subunit protein uL22 (111 aa).

It belongs to the universal ribosomal protein uL22 family. In terms of assembly, part of the 50S ribosomal subunit.

This protein binds specifically to 23S rRNA; its binding is stimulated by other ribosomal proteins, e.g. L4, L17, and L20. It is important during the early stages of 50S assembly. It makes multiple contacts with different domains of the 23S rRNA in the assembled 50S subunit and ribosome. Its function is as follows. The globular domain of the protein is located near the polypeptide exit tunnel on the outside of the subunit, while an extended beta-hairpin is found that lines the wall of the exit tunnel in the center of the 70S ribosome. This Clostridium novyi (strain NT) protein is Large ribosomal subunit protein uL22.